A 131-amino-acid polypeptide reads, in one-letter code: Thioredoxin H4-1 (131 aa).

The Thioredoxin domain maps to Ser-3–Asp-129. Catalysis depends on nucleophile residues Cys-55 and Cys-58. Cys-55 and Cys-58 are joined by a disulfide.

Belongs to the thioredoxin family. Plant H-type subfamily.

It is found in the cytoplasm. Functionally, probable thiol-disulfide oxidoreductase that may be involved in the redox regulation of a number of cytosolic enzymes. This is Thioredoxin H4-1 from Oryza sativa subsp. japonica (Rice).